Here is a 359-residue protein sequence, read N- to C-terminus: Lipopolysaccharide 1,6-galactosyltransferase (359 aa).

Q242 and E274 together coordinate UDP.

Belongs to the glycosyltransferase group 1 family. Glycosyltransferase 4 subfamily.

It catalyses the reaction alpha-D-Glc-(1-&gt;3)-[L-alpha-D-Hep-(1-&gt;7)]-4-O-PO3(2-)-L-alpha-D-Hep-(1-&gt;3)-4-O-PO3(2-)-L-alpha-D-Hep-(1-&gt;5)-[alpha-Kdo-(2-&gt;4)]-alpha-Kdo-(2-&gt;6)-lipid A + UDP-alpha-D-galactose = alpha-D-Gal-(1-&gt;6)-alpha-D-Glc-(1-&gt;3)-[L-alpha-D-Hep-(1-&gt;7)]-4-O-PO3(2-)-L-alpha-D-Hep-(1-&gt;3)-4-O-PO3(2-)-L-alpha-D-Hep-(1-&gt;5)-[alpha-Kdo-(2-&gt;4)]-alpha-Kdo-(2-&gt;6)-lipid A + UDP + H(+). Its pathway is bacterial outer membrane biogenesis; LPS core biosynthesis. Functionally, galactosyltransferase involved in the biosynthesis of the core oligosaccharide region of lipopolysaccharide (LPS). Catalyzes the addition of galactose from UDP-galactose to the first glucose residue of the LPS outer core. Cannot use other sugar donors, such as UDP-glucose, UDP-glucuronic acid, UDP-galacuronic acid, GDP-mannose, ADP-glucose and GDP-glucose. In the absence of a lipid acceptor, can hydrolyze UDP-galactose to UDP and galactose. This is Lipopolysaccharide 1,6-galactosyltransferase from Escherichia coli (strain K12).